The following is a 100-amino-acid chain: Pancreatic trypsin inhibitor (100 aa).

Positions 1 to 21 are cleaved as a signal peptide; the sequence is MKMSRLCLSVALLVLLGTLAA. Positions 22 to 35 are excised as a propeptide; that stretch reads STPGCDTSNQAKAQ. The region spanning 40 to 90 is the BPTI/Kunitz inhibitor domain; it reads CLEPPYTGPCKARIIRYFYNAKAGLCQTFVYGGCRAKRNNFKSAEDCMRTC. Cystine bridges form between Cys-40-Cys-90, Cys-49-Cys-73, and Cys-65-Cys-86. The propeptide occupies 94–100; that stretch reads IGPWENL.

The protein resides in the secreted. In terms of biological role, inhibits trypsin, kallikrein, chymotrypsin, and plasmin. The chain is Pancreatic trypsin inhibitor from Bos taurus (Bovine).